The primary structure comprises 691 residues: Elongation factor G (691 aa).

In terms of domain architecture, tr-type G spans 8 to 283 (KKVRNIGIAA…AVVAYLPAPD (276 aa)). GTP-binding positions include 17–24 (AHIDAGKT), 81–85 (DTPGH), and 135–138 (NKMD).

It belongs to the TRAFAC class translation factor GTPase superfamily. Classic translation factor GTPase family. EF-G/EF-2 subfamily.

The protein localises to the cytoplasm. Catalyzes the GTP-dependent ribosomal translocation step during translation elongation. During this step, the ribosome changes from the pre-translocational (PRE) to the post-translocational (POST) state as the newly formed A-site-bound peptidyl-tRNA and P-site-bound deacylated tRNA move to the P and E sites, respectively. Catalyzes the coordinated movement of the two tRNA molecules, the mRNA and conformational changes in the ribosome. The protein is Elongation factor G of Campylobacter jejuni subsp. jejuni serotype O:23/36 (strain 81-176).